A 247-amino-acid polypeptide reads, in one-letter code: Probable transcriptional regulatory protein GTNG_2524 (247 aa).

Positions 1–14 (MAGHSKWKNIQRRK) are enriched in basic residues. Residues 1 to 21 (MAGHSKWKNIQRRKNAQDAKR) form a disordered region.

It belongs to the TACO1 family.

The protein localises to the cytoplasm. The protein is Probable transcriptional regulatory protein GTNG_2524 of Geobacillus thermodenitrificans (strain NG80-2).